The primary structure comprises 65 residues: Small ribosomal subunit protein bS21 (65 aa).

A compositionally biased stretch (basic and acidic residues) spans 43 to 52 (EKKRVKEALA). Positions 43 to 65 (EKKRVKEALARKRSRKKARKEQD) are disordered. The segment covering 53–65 (RKRSRKKARKEQD) has biased composition (basic residues).

The protein belongs to the bacterial ribosomal protein bS21 family.

In Koribacter versatilis (strain Ellin345), this protein is Small ribosomal subunit protein bS21.